The sequence spans 142 residues: MVLSAADKNNVKGIFTKIAGHAEEYGAETLERMFITYPPTKTYFPHFDLSHGSAQIKGHGKKVVAALIEAANHIDDIAGTLSKLSDLHAHKLRVDPVNFKLLGQCFLVVVAIHHPAALTPEVHASLDKFLCAVGTVLTAKYR.

The region spanning 2 to 142 (VLSAADKNNV…VGTVLTAKYR (141 aa)) is the Globin domain. H59 lines the O2 pocket. H88 contacts heme b.

Belongs to the globin family. Heterotetramer of two alpha chains and two beta chains. As to expression, red blood cells.

Involved in oxygen transport from the lung to the various peripheral tissues. The sequence is that of Hemoglobin subunit alpha-A (HBAA) from Meleagris gallopavo (Wild turkey).